We begin with the raw amino-acid sequence, 309 residues long: MPIRVPDELPAVNFLRNENVFVMTSSRAKTQEIRPLKVLVLNLMPKKIETENQFLRLLSNSPLQIDIQLLRIDSRESKNTPAEHLNNFYCDFDDIQNDNFDGLIVTGAPLGLVDFCDVVYWPQIARVIEWAKEHVTSTLFVCWAVQAALNILYGIPKMTRKEKLSGVYSHQTLQPHALLTRGFDETFLAPHSRYADFPVDVIRQYTDLDILVESEQAGAYLFASKDKRLAFVTGHPEYDALTLAGEFFRDYDAGLDPAVPVNYFPDDNPELAPKASWRSHGHLLFVNWLNYYVYQITPYDLRRMNPTLD.

Cys-142 functions as the Acyl-thioester intermediate in the catalytic mechanism. Positions 163 and 192 each coordinate substrate. Residue His-235 is the Proton acceptor of the active site. The active site involves Glu-237. Position 249 (Arg-249) interacts with substrate.

This sequence belongs to the MetA family.

It localises to the cytoplasm. The enzyme catalyses L-homoserine + succinyl-CoA = O-succinyl-L-homoserine + CoA. The protein operates within amino-acid biosynthesis; L-methionine biosynthesis via de novo pathway; O-succinyl-L-homoserine from L-homoserine: step 1/1. Transfers a succinyl group from succinyl-CoA to L-homoserine, forming succinyl-L-homoserine. The polypeptide is Homoserine O-succinyltransferase (Pectobacterium carotovorum subsp. carotovorum (strain PC1)).